The sequence spans 610 residues: Zinc metalloproteinase-disintegrin-like halysase (610 aa).

Positions 1 to 20 (MIQVLLVTICLAVFPYQGSS) are cleaved as a signal peptide. A propeptide spanning residues 21 to 182 (IILESGNVND…WESYEPIKKA (162 aa)) is cleaved from the precursor. In terms of domain architecture, Peptidase M12B spans 199–395 (KYVKLVMVAD…DMPQCILKKP (197 aa)). An N-linked (GlcNAc...) asparagine glycan is attached at Asn-218. 3 disulfide bridges follow: Cys-310–Cys-390, Cys-350–Cys-374, and Cys-352–Cys-357. His-335 is a binding site for Zn(2+). Glu-336 is an active-site residue. The Zn(2+) site is built by His-339 and His-345. The 86-residue stretch at 403–488 (PPVCGNYFVE…AECTDRFQRN (86 aa)) folds into the Disintegrin domain. Ca(2+) contacts are provided by Val-405, Asn-408, Phe-410, Glu-412, Glu-415, and Asp-418. 14 disulfide bridges follow: Cys-406-Cys-435, Cys-417-Cys-430, Cys-419-Cys-425, Cys-429-Cys-452, Cys-443-Cys-449, Cys-448-Cys-474, Cys-461-Cys-481, Cys-468-Cys-499, Cys-492-Cys-504, Cys-511-Cys-561, Cys-526-Cys-572, Cys-539-Cys-549, Cys-556-Cys-598, and Cys-592-Cys-603. Positions 467 to 469 (ECD) match the D/ECD-tripeptide motif.

This sequence belongs to the venom metalloproteinase (M12B) family. P-III subfamily. P-IIIa sub-subfamily. Monomer. It depends on Zn(2+) as a cofactor. As to expression, expressed by the venom gland.

It localises to the secreted. With respect to regulation, inhibited by EDTA and EGTA. Not inhibited by PMSF, antipain, pepstatin, and iodoacetamide. Strongly inhibits the collagen-induced human platelet aggregation (inhibition of alpha-2/beta-1 (ITGA2/ITGB1) integrin). Hydrolyzes the Aalpha-chain of fibrinogen, without cleavage of Bbeta- and gamma-chains. Degrades type IV collagen (but not types I, II and V), fibronectin and vitronectin and also integrins alpha-1/beta-1 (ITGA1/ITGB1) and alpha-5/beta/1 (ITGA5/ITGB1) (but not alpha-V/beta-3 (ITGAV/ITGB3) and alpha-V/beta-5 (ITGAV/ITGB5) integrins). Both metalloproteinase (peptidase M12B) and disintegrin-like domains (recombinantly expressed and named halydin) play characteristic roles to inhibit human platelet aggregation. Induces apoptosis and strongly inhibits proliferation of endothelial cells as well as adhesion of the cells to extracellular matrix proteins. The apoptosis is closely associated with activation of caspase-3 and decreased level of Bcl-X(L)/Bax. Apohalysase, which lacks metalloprotease activity, is also able to induce the apoptosis. Cleaves insulin B chain at '34-His-|-Leu-35', '37-Glu-|-Ala-38', '38-Ala-|-Leu-39', '39-Leu-|-Tyr-40', '40-Tyr-|-Leu-41', '47-Gly-|-Phe-48' and '48-Phe-|-Phe-49' bonds. The protein is Zinc metalloproteinase-disintegrin-like halysase of Gloydius halys (Chinese water mocassin).